Here is a 958-residue protein sequence, read N- to C-terminus: Unconventional myosin-Ih (958 aa).

A Myosin motor domain is found at 12-691; it reads GVQDFVLLDA…TLFATEDAFE (680 aa). 105 to 112 contributes to the ATP binding site; sequence GESGAGKT. Ser365 bears the Phosphoserine mark. Residues 568-590 are actin-binding; that stretch reads LSSLLEILISKEPSYIRCIKPNE. IQ domains are found at residues 694 to 716 and 717 to 746; these read KHQL…EYMK and KRQA…AVQI. One can recognise a TH1 domain in the interval 773-955; the sequence is RKNYILNLRY…NGQLRVVSAG (183 aa).

It belongs to the TRAFAC class myosin-kinesin ATPase superfamily. Myosin family. Highly expressed in the central nervous system, including the forebrain, midbrain and lower medulla. In the lower medulla, it is broadly expressed throughout the reticular formation. It is expressed in the retrotrapezoid nucleus and the nucleus of the solitary tract, as well as motor neurons of the facial, vagal and ambiguus nuclei. Expressed in neonatal inner-ear organs.

Functionally, myosins are actin-based motor molecules with ATPase activity. Unconventional myosins serve in intracellular movements. Their highly divergent tails are presumed to bind to membranous compartments, which would be moved relative to actin filaments. This chain is Unconventional myosin-Ih (Myo1h), found in Mus musculus (Mouse).